A 224-amino-acid polypeptide reads, in one-letter code: Large ribosomal subunit protein uL16z (224 aa).

This sequence belongs to the universal ribosomal protein uL16 family. As to quaternary structure, component of the small ribosomal subunit. Mature ribosomes consist of a small (40S) and a large (60S) subunit. The 40S subunit contains about 33 different proteins and 1 molecule of RNA (18S). The 60S subunit contains about 49 different proteins and 3 molecules of RNA (25S, 5.8S and 5S).

In Oryza sativa subsp. indica (Rice), this protein is Large ribosomal subunit protein uL16z (SC34).